The primary structure comprises 656 residues: MAATRYNSGDLRRQVGSPRAKNRDTKETLCRNVVIYGHCRWEDSGCTFNHDQNKASVSQTDLNSNRRVFNVESPSFTPANQQQSAGKKSTFSSQAASAAPFTPRGVGTSTPTLQQANDSTIFNPAAIREFTPQNYDVGNTISQNGAQHVTQDGGLYSDPFSISSLGQTMPPQGQYNPYANDPNNLAGAGAGLYQPAGFGNGLVHPPNYHLYQPPSELYRPSLQPYQRTTYDFFIPKDRRENLQKKLFHMQQLLPNSGLPNLDRWHSLFPLDTKATRNSTCFGYPSWMYKAQNNKNGRHFALRRIEGYRLTNEKAILNVTKEWKKIINANIVTVHEAFTTEFFGDSSLIFVYDFHPLSETLYDHHFPPNNSHNRLRNTNKIPENLLWSYVCQIANALLAIHNAKLAARCLELSKIIWENNRIRLAACSILDVLHHDSPNRKTIEELQQEDFVKFGRIILALATNTPTLNFNNIDAALATIVPRYSTQLRGVLEWLIKPSAPGETKTVETLLGGITTHLANFANFVMQESDEKEFHLMRELENGRIARLMFKLSVVNERGDSCGVHNWSETGERLLLKLFRDYVFHQVDADGKARLDTNHYLNCLSKLDASSEEQILLTSRDNATVFVVSYRSIRQMLDRAYGELGKESKPSATGATI.

Disordered regions lie at residues 1-24 (MAAT…KNRD) and 75-117 (SFTP…QQAN). Residues 24-53 (DTKETLCRNVVIYGHCRWEDSGCTFNHDQN) form a C3H1-type zinc finger. The PABPC-interacting motif-2 (PAM-2) signature appears at 63-83 (NSNRRVFNVESPSFTPANQQQ). 2 stretches are compositionally biased toward polar residues: residues 75 to 96 (SFTP…SQAA) and 107 to 117 (GTSTPTLQQAN). Residues 251–514 (QLLPNSGLPN…TVETLLGGIT (264 aa)) are pseudokinase domain. ATP contacts are provided by residues 275 to 280 (TRNSTC), Arg302, 352 to 359 (DFHPLSET), and 412 to 413 (SK). Residues 515 to 553 (THLANFANFVMQESDEKEFHLMRELENGRIARLMFKLSV) are a coiled coil. The tract at residues 554–656 (VNERGDSCGV…SKPSATGATI (103 aa)) is knob domain.

It belongs to the protein kinase superfamily. PAN3 family. As to quaternary structure, homodimer. Forms a heterotrimer with a catalytic subunit par-1/pan2 to form the poly(A)-nuclease (PAN) deadenylation complex. Interacts (via PAM-2 motif) with poly(A)-binding protein pabp-1 (via PABC domain), conferring substrate specificity of the enzyme complex.

It localises to the cytoplasm. Functionally, regulatory subunit of the poly(A)-nuclease (PAN) deadenylation complex, one of two cytoplasmic mRNA deadenylases involved in mRNA turnover. PAN specifically shortens poly(A) tails of RNA and the activity is stimulated by poly(A)-binding protein pabp-1. PAN deadenylation is followed by rapid degradation of the shortened mRNA tails by the CCR4-NOT complex. Deadenylated mRNAs are then degraded by two alternative mechanisms, namely exosome-mediated 3'-5' exonucleolytic degradation, or deadenylation-dependent mRNA decaping and subsequent 5'-3' exonucleolytic degradation by rgb-30/xrn1. May also be involved in post-transcriptional maturation of mRNA poly(A) tails. par-2/pan3 acts as a positive regulator for PAN activity, recruiting the catalytic subunit par-1/pan2 to mRNA via its interaction with RNA and with pabp-1. The protein is PAN2-PAN3 deadenylation complex subunit pan3 (par-2) of Neurospora crassa (strain ATCC 24698 / 74-OR23-1A / CBS 708.71 / DSM 1257 / FGSC 987).